A 338-amino-acid polypeptide reads, in one-letter code: TPR repeat-containing protein MJ0941 (338 aa).

TPR repeat units follow at residues 27–62 (LEAV…EPDF), 63–96 (YLAL…ESKN), 97–130 (PITW…ENRF), 131–164 (LSAF…TPNF), 165–198 (VPMW…KPHD), 199–232 (KNAL…LNVK), 268–301 (VALW…QPHY), and 302–335 (IKAL…IHKD).

This chain is TPR repeat-containing protein MJ0941, found in Methanocaldococcus jannaschii (strain ATCC 43067 / DSM 2661 / JAL-1 / JCM 10045 / NBRC 100440) (Methanococcus jannaschii).